A 100-amino-acid polypeptide reads, in one-letter code: uncharacterized protein (100 aa).

Residues 62–82 (IPIVIIVSIFILLIIGSISLY) form a helical membrane-spanning segment.

It is found in the membrane. This is an uncharacterized protein from Dictyostelium discoideum (Social amoeba).